The following is a 155-amino-acid chain: Endoribonuclease YbeY (155 aa).

Positions 120, 124, and 130 each coordinate Zn(2+).

The protein belongs to the endoribonuclease YbeY family. Zn(2+) serves as cofactor.

It localises to the cytoplasm. Its function is as follows. Single strand-specific metallo-endoribonuclease involved in late-stage 70S ribosome quality control and in maturation of the 3' terminus of the 16S rRNA. The sequence is that of Endoribonuclease YbeY from Staphylococcus aureus (strain MSSA476).